Here is a 135-residue protein sequence, read N- to C-terminus: Large-conductance mechanosensitive channel (135 aa).

2 helical membrane-spanning segments follow: residues 9 to 29 (AFAA…GAAF) and 79 to 99 (IQTI…LKAI).

The protein belongs to the MscL family. In terms of assembly, homopentamer.

The protein resides in the cell inner membrane. Functionally, channel that opens in response to stretch forces in the membrane lipid bilayer. May participate in the regulation of osmotic pressure changes within the cell. In Aeromonas salmonicida (strain A449), this protein is Large-conductance mechanosensitive channel.